Reading from the N-terminus, the 429-residue chain is 3-phosphoshikimate 1-carboxyvinyltransferase (429 aa).

The 3-phosphoshikimate site is built by Lys-23, Ser-24, and Arg-28. Residue Lys-23 coordinates phosphoenolpyruvate. Phosphoenolpyruvate is bound by residues Gly-97 and Arg-125. Residues Ser-170, Ser-171, Gln-172, Ser-198, Asp-314, Asn-338, and Lys-342 each coordinate 3-phosphoshikimate. Residue Gln-172 coordinates phosphoenolpyruvate. Residue Asp-314 is the Proton acceptor of the active site. The phosphoenolpyruvate site is built by Arg-346, Arg-388, and Lys-413.

The protein belongs to the EPSP synthase family. In terms of assembly, monomer.

Its subcellular location is the cytoplasm. It catalyses the reaction 3-phosphoshikimate + phosphoenolpyruvate = 5-O-(1-carboxyvinyl)-3-phosphoshikimate + phosphate. The protein operates within metabolic intermediate biosynthesis; chorismate biosynthesis; chorismate from D-erythrose 4-phosphate and phosphoenolpyruvate: step 6/7. Functionally, catalyzes the transfer of the enolpyruvyl moiety of phosphoenolpyruvate (PEP) to the 5-hydroxyl of shikimate-3-phosphate (S3P) to produce enolpyruvyl shikimate-3-phosphate and inorganic phosphate. This chain is 3-phosphoshikimate 1-carboxyvinyltransferase, found in Pectobacterium atrosepticum (strain SCRI 1043 / ATCC BAA-672) (Erwinia carotovora subsp. atroseptica).